Here is a 190-residue protein sequence, read N- to C-terminus: Translation machinery-associated protein 22 (190 aa).

The interval 63-83 (LNVSGTKDSNAEEQPAKLTKE) is disordered. The 72-residue stretch at 99–170 (VLIKTIERTK…DIFDFILEKF (72 aa)) folds into the SUI1 domain.

It belongs to the DENR family. Interacts with the 40S ribosomal subunit.

The protein resides in the cytoplasm. The polypeptide is Translation machinery-associated protein 22 (tma22) (Schizosaccharomyces pombe (strain 972 / ATCC 24843) (Fission yeast)).